Here is a 135-residue protein sequence, read N- to C-terminus: ATP synthase epsilon chain (135 aa).

It belongs to the ATPase epsilon chain family. In terms of assembly, F-type ATPases have 2 components, CF(1) - the catalytic core - and CF(0) - the membrane proton channel. CF(1) has five subunits: alpha(3), beta(3), gamma(1), delta(1), epsilon(1). CF(0) has three main subunits: a, b and c.

The protein resides in the cell inner membrane. Functionally, produces ATP from ADP in the presence of a proton gradient across the membrane. This chain is ATP synthase epsilon chain, found in Hyphomonas neptunium (strain ATCC 15444).